A 385-amino-acid chain; its full sequence is MYSKELGINFFGNESNKKNQLNKIEILKKNINNFKIFLVIAGTNTSQISGISAAGINAKSRRKTALADAEFLLKGASKDHKYKLPLLNAGVTPALISHVCAKLINIHPVIVPLGLGVKPYFNHLVVEDRDLGPSNCLTTGKSMSKKRVINLYEKGLAIGKSSKQPILISESVPGGTTTAQAVMEAFGLRVANLVGSSLFKAPRELRKKVVQKGLLNANLKTDFDSFDVVAAVGDPFQAFSMGLLIGARLAKQSVILSGGSQMLAIILLVLEFLDLKNEDDFIEDVFIATTGWLVKDNSLSDLLDIINEKYDVKLLGLASPLNFKFSKYKELKDYELGHVKEGVGAGGISLLAFLDGFKNEEIVSLCQQNLEMMKVLGQISLEKDC.

It belongs to the UPF0284 family.

The sequence is that of UPF0284 protein P9215_05181 from Prochlorococcus marinus (strain MIT 9215).